The primary structure comprises 85 residues: Prosialokinin (85 aa).

An N-terminal signal peptide occupies residues 1-23 (MNMFITVQIVIVLVLAVLSEAAS). A propeptide spanning residues 24-74 (LPTATERKDAMDEGPNQSDEPEGSVADPSTKDDDYSDSLKQDEKYYKVRLL) is cleaved from the precursor. The tract at residues 26–61 (TATERKDAMDEGPNQSDEPEGSVADPSTKDDDYSDS) is disordered. The span at 52–61 (STKDDDYSDS) shows a compositional bias: basic and acidic residues. Methionine 84 is subject to Methionine amide.

It belongs to the tachykinin family. Expressed exclusively in the medial lobe of female salivary gland. Not detected in female carcass without head and salivary glands. Not detected in male tissues.

It is found in the secreted. In terms of biological role, vasodilatory peptide. Facilitates mosquito blood feeding on vertebrate host. Induces nitric oxide (NO) release in blood vessels through the activation of the nitric oxide synthase (NOS3). Enhances endothelial permeability and induces edema at the site of inoculation in the host. Induces host smooth muscle contraction. Down-regulates production of Th1 cytokines, such as IL2 and IFN-gamma (IFNG), in mouse splenocytes. Up-regulates production of Th2 cytokines, such as IL4 and IL10, in mouse splenocytes. Promotes recruitment of host leukocytes, especially neutrophils and CD8+ T cells, to the bite site. Modulates cytokine production by host macrophages. Modulates populations of monocytes/macrophages, plasmacytoid dendritic cells, B cells, CD4+ T cells, NK and NKT cells, shifting mammalian immunity towards Th2 responses. Functionally, (Microbial infection) Promotes Semliki Forest virus infection in the host. Its function is as follows. (Microbial infection) Does not affect Zika virus replication in the host. This Aedes aegypti (Yellowfever mosquito) protein is Prosialokinin.